Consider the following 379-residue polypeptide: DNA replication and repair protein RecF (379 aa).

30–37 provides a ligand contact to ATP; the sequence is GDNAQGKS.

It belongs to the RecF family.

Its subcellular location is the cytoplasm. Functionally, the RecF protein is involved in DNA metabolism; it is required for DNA replication and normal SOS inducibility. RecF binds preferentially to single-stranded, linear DNA. It also seems to bind ATP. The protein is DNA replication and repair protein RecF of Thermosynechococcus vestitus (strain NIES-2133 / IAM M-273 / BP-1).